A 427-amino-acid chain; its full sequence is Glutamate-1-semialdehyde 2,1-aminomutase (427 aa).

At K265 the chain carries N6-(pyridoxal phosphate)lysine.

The protein belongs to the class-III pyridoxal-phosphate-dependent aminotransferase family. HemL subfamily. As to quaternary structure, homodimer. Pyridoxal 5'-phosphate serves as cofactor.

The protein localises to the cytoplasm. The enzyme catalyses (S)-4-amino-5-oxopentanoate = 5-aminolevulinate. It functions in the pathway porphyrin-containing compound metabolism; protoporphyrin-IX biosynthesis; 5-aminolevulinate from L-glutamyl-tRNA(Glu): step 2/2. The polypeptide is Glutamate-1-semialdehyde 2,1-aminomutase (Idiomarina loihiensis (strain ATCC BAA-735 / DSM 15497 / L2-TR)).